We begin with the raw amino-acid sequence, 206 residues long: 2,3-bisphosphoglycerate-dependent phosphoglycerate mutase (206 aa).

Residues 9–16 (RHGQSEWN), 22–23 (TG), arginine 61, 88–91 (ERNY), lysine 99, 115–116 (RR), and 159–160 (GN) each bind substrate. Residue histidine 10 is the Tele-phosphohistidine intermediate of the active site. Catalysis depends on glutamate 88, which acts as the Proton donor/acceptor.

It belongs to the phosphoglycerate mutase family. BPG-dependent PGAM subfamily. In terms of assembly, homodimer.

The enzyme catalyses (2R)-2-phosphoglycerate = (2R)-3-phosphoglycerate. The protein operates within carbohydrate degradation; glycolysis; pyruvate from D-glyceraldehyde 3-phosphate: step 3/5. Functionally, catalyzes the interconversion of 2-phosphoglycerate and 3-phosphoglycerate. In Bartonella henselae (strain ATCC 49882 / DSM 28221 / CCUG 30454 / Houston 1) (Rochalimaea henselae), this protein is 2,3-bisphosphoglycerate-dependent phosphoglycerate mutase.